Here is a 93-residue protein sequence, read N- to C-terminus: Phosphoribosyl-ATP pyrophosphatase (93 aa).

Belongs to the PRA-PH family.

It localises to the cytoplasm. It carries out the reaction 1-(5-phospho-beta-D-ribosyl)-ATP + H2O = 1-(5-phospho-beta-D-ribosyl)-5'-AMP + diphosphate + H(+). The protein operates within amino-acid biosynthesis; L-histidine biosynthesis; L-histidine from 5-phospho-alpha-D-ribose 1-diphosphate: step 2/9. This Mycolicibacterium paratuberculosis (strain ATCC BAA-968 / K-10) (Mycobacterium paratuberculosis) protein is Phosphoribosyl-ATP pyrophosphatase.